A 376-amino-acid polypeptide reads, in one-letter code: Chlorophyll synthase, chloroplastic (376 aa).

A chloroplast-targeting transit peptide spans 1–47 (MATSHLLAAASSTAASSATFRPPLLSLRSPPPSSLRLNRRRHFQVVR). Residues 48 to 69 (AAETDKETKANAPEKAPAGGSS) form a disordered region. Helical transmembrane passes span 95–115 (PVTWPPLVWGVLCGAAASGNF), 171–191 (VITQIWALLLAGLGLGALLDV), 197–217 (FPIIFYLAVGGSLLSYIYSAP), 230–250 (FALGASYIGLPWWAGQALFGT), 255–275 (IVVLTSLYSIAGLGIAIVNDF), 300–320 (WICVGAIDITQLSVAGYLFSS), 325–345 (YALALLGLTIPQVVFQFQYFL), and 355–375 (YQASAQPFFVLGLLVTALATS).

It belongs to the UbiA prenyltransferase family. Chlorophyll synthase subfamily.

Its subcellular location is the plastid. It is found in the chloroplast membrane. It carries out the reaction phytyl diphosphate + chlorophyllide a + H(+) = chlorophyll a + diphosphate. Functionally, involved in one of the last steps of the biosynthesis of chlorophyll a. The polypeptide is Chlorophyll synthase, chloroplastic (CHLG) (Oryza sativa subsp. japonica (Rice)).